A 480-amino-acid chain; its full sequence is Flap endonuclease 1 (480 aa).

An N-domain region spans residues 1–106; it reads MGIKGLTKFI…SELEKRGEKR (106 aa). Residue aspartate 34 coordinates Mg(2+). Arginine 47 and arginine 72 together coordinate DNA. Mg(2+) contacts are provided by aspartate 88, glutamate 160, glutamate 162, aspartate 181, and aspartate 183. The interval 124 to 266 is I-domain; sequence EIKKQSGRTV…KTAYNLIKEY (143 aa). Glutamate 160 contributes to the DNA binding site. Residues glycine 244 and aspartate 246 each contribute to the DNA site. Residue aspartate 246 participates in Mg(2+) binding. The interval 349 to 357 is interaction with PCNA; that stretch reads TQRRLDTFF. The disordered stretch occupies residues 379 to 461; that stretch reads TKGKGKKREI…NIKNENVKED (83 aa). Residues 404–428 are compositionally biased toward basic and acidic residues; sequence NVKDEKKNNEKVDELKNKSDENLVK. Positions 429 to 438 are enriched in acidic residues; that stretch reads DEEDDQDDYD.

Belongs to the XPG/RAD2 endonuclease family. FEN1 subfamily. As to quaternary structure, interacts with PCNA. Three molecules of FEN1 bind to one PCNA trimer with each molecule binding to one PCNA monomer. PCNA stimulates the nuclease activity without altering cleavage specificity. Mg(2+) serves as cofactor. Post-translationally, phosphorylated. Phosphorylation upon DNA damage induces relocalization to the nuclear plasma.

It is found in the nucleus. The protein localises to the nucleolus. The protein resides in the nucleoplasm. It localises to the mitochondrion. Inhibited by monovalent metal ions. In terms of biological role, structure-specific nuclease with 5'-flap endonuclease and 5'-3' exonuclease activities involved in DNA replication and repair. During DNA replication, cleaves the 5'-overhanging flap structure that is generated by displacement synthesis when DNA polymerase encounters the 5'-end of a downstream Okazaki fragment. It enters the flap from the 5'-end and then tracks to cleave the flap base, leaving a nick for ligation. Also involved in the long patch base excision repair (LP-BER) pathway, by cleaving within the apurinic/apyrimidinic (AP) site-terminated flap. Acts as a genome stabilization factor that prevents flaps from equilibrating into structures that lead to duplications and deletions. Also possesses 5'-3' exonuclease activity on nicked or gapped double-stranded DNA, and exhibits RNase H activity. Also involved in replication and repair of rDNA and in repairing mitochondrial DNA. This chain is Flap endonuclease 1, found in Plasmodium yoelii yoelii.